Consider the following 61-residue polypeptide: Small ribosomal subunit protein uS14 (61 aa).

C24, C27, C40, and C43 together coordinate Zn(2+).

Belongs to the universal ribosomal protein uS14 family. Zinc-binding uS14 subfamily. Part of the 30S ribosomal subunit. Contacts proteins S3 and S10. It depends on Zn(2+) as a cofactor.

Its function is as follows. Binds 16S rRNA, required for the assembly of 30S particles and may also be responsible for determining the conformation of the 16S rRNA at the A site. This Treponema pallidum (strain Nichols) protein is Small ribosomal subunit protein uS14.